A 959-amino-acid chain; its full sequence is Transcription factor 1 (959 aa).

C2H2-type zinc fingers lie at residues 2-24 (VFCT…ILTH) and 30-52 (FKCF…YTVH). Residues 79–105 (CSNCAKTKTKCDKKFPCSRCASRNLRC) constitute a DNA-binding region (zn(2)-C6 fungal-type). Positions 154 to 226 (PTGHVEESSK…SFPGFDDYNQ (73 aa)) are disordered. The segment covering 163–178 (KSSSPSGSPTSISHNS) has biased composition (low complexity).

The protein resides in the nucleus. Elsinochromes biosynthesis cluster-specific transcription factor that positively regulates the expression of cluster genes including RDT1, PKS1, PRF1 and HP1, and subsequent elsinochromes production. This chain is Transcription factor 1, found in Elsinoe fawcettii (Citrus scab fungus).